A 147-amino-acid polypeptide reads, in one-letter code: Delta-latroinsectotoxin-Lhe1a (147 aa).

ANK repeat units lie at residues 57-59 (VSI), 66-78 (NNWT…IYFK), 79-96 (KNPA…DIEA), and 98-125 (TSIM…TLDE).

It belongs to the cationic peptide 01 (latrotoxin) family. 04 (delta-latroinsectotoxin) subfamily. In terms of assembly, homotetramer in membrane. As to expression, expressed by the venom gland.

The protein resides in the secreted. The protein localises to the target cell membrane. Functionally, insecticidal presynaptic neurotoxin that induces massive neurotransmitter release at insect (but not vertebrate) neuromuscular junctions. Native toxin forms cation-permeable pores (with high permeability to calcium) in lipid membranes locust muscle membrane and artificial lipid bilayers. May bind to insect neurexin-1 homolog, insect adhesion G protein-coupled receptor L1 homolog, and insect receptor-type tyrosine-protein phosphatase S homolog, and induces neurotransmitter exocytosis both by forming tetrameric pores in membranes and signaling via G protein-coupled receptor. Oligomerization is a process independent of divalent cations. The protein is Delta-latroinsectotoxin-Lhe1a of Latrodectus hesperus (Western black widow spider).